Reading from the N-terminus, the 427-residue chain is Serine--tRNA ligase (427 aa).

228-230 is a binding site for L-serine; sequence TSE. 259–261 is an ATP binding site; it reads RSE. Residue Glu282 participates in L-serine binding. Position 346 to 349 (346 to 349) interacts with ATP; sequence EISS. Ser384 provides a ligand contact to L-serine.

It belongs to the class-II aminoacyl-tRNA synthetase family. Type-1 seryl-tRNA synthetase subfamily. In terms of assembly, homodimer. The tRNA molecule binds across the dimer.

It localises to the cytoplasm. The catalysed reaction is tRNA(Ser) + L-serine + ATP = L-seryl-tRNA(Ser) + AMP + diphosphate + H(+). It carries out the reaction tRNA(Sec) + L-serine + ATP = L-seryl-tRNA(Sec) + AMP + diphosphate + H(+). It participates in aminoacyl-tRNA biosynthesis; selenocysteinyl-tRNA(Sec) biosynthesis; L-seryl-tRNA(Sec) from L-serine and tRNA(Sec): step 1/1. Functionally, catalyzes the attachment of serine to tRNA(Ser). Is also able to aminoacylate tRNA(Sec) with serine, to form the misacylated tRNA L-seryl-tRNA(Sec), which will be further converted into selenocysteinyl-tRNA(Sec). The chain is Serine--tRNA ligase from Ehrlichia ruminantium (strain Welgevonden).